Consider the following 873-residue polypeptide: Sister chromatid cohesion protein PDS5 homolog C (873 aa).

HEAT repeat units follow at residues 53 to 92, 99 to 136, 149 to 187, and 189 to 227; these read NALT…ITAP, DQMK…VAKV, ALLI…ESED, and PSEM…KLKT. Residues 266–301 are compositionally biased toward basic and acidic residues; the sequence is NEKEDSQGHIKRETEVEKAAEISTPERTDAPKDESG. 2 disordered regions span residues 266–611 and 658–873; these read NEKE…LVGS and SPLD…KRKR. Thr289 bears the Phosphothreonine mark. A compositionally biased stretch (polar residues) spans 303 to 319; the sequence is SGVSNGVAQQNDSSVDT. A compositionally biased stretch (basic and acidic residues) spans 320–334; sequence DSMKKQDDTGAKDEP. A compositionally biased stretch (polar residues) spans 336–348; sequence QLDNPRNTDLNNT. Composition is skewed to basic and acidic residues over residues 349-365 and 373-394; these read TEEK…KENE and DLSK…DSKD. Polar residues-rich tracts occupy residues 400-411 and 418-438; these read PVDSSVTAATSS and SVQI…SSPS. A compositionally biased stretch (basic and acidic residues) spans 456-466; sequence KKKESSTEEVK. The segment covering 494 to 510 has biased composition (low complexity); it reads KVASSSKTKPTVPPSKK. Composition is skewed to basic and acidic residues over residues 511–526 and 535–555; these read STSE…KKVV and TKPK…EESL. Residues 661-681 show a composition bias toward acidic residues; it reads DESELSQDEEAADQTGQEEDA. Positions 701-725 are enriched in low complexity; it reads SSAKKGSGAGSSKAKATPASKSSKT. Over residues 726-746 the composition is skewed to basic and acidic residues; sequence SQDDKTASKSKDSKEASREEE. Acidic residues predominate over residues 747 to 757; sequence ASSEEESEEEE. Low complexity-rich tracts occupy residues 795-814 and 822-831; these read KATT…PAKS and KSGSASTPAS. Residues 844 to 853 are compositionally biased toward basic and acidic residues; it reads ETPKEPEPAT. Over residues 854-866 the composition is skewed to low complexity; sequence KAKSGKSQGSQSK.

The protein belongs to the PDS5 family. Interacts with the cohesin complex.

Its subcellular location is the nucleus. Functionally, cohesin cofactor dispensable during the meiotic division but playing an important role in DNA repair by homologous recombination (HR) probably by helping SMC5/SMC6 complex. Regulator of sister chromatid cohesion in mitosis which may stabilize cohesin complex association with chromatin. May couple sister chromatid cohesion during mitosis to DNA replication. Cohesion ensures that chromosome partitioning is accurate in both meiotic and mitotic cells and plays an important role in DNA repair. This chain is Sister chromatid cohesion protein PDS5 homolog C, found in Arabidopsis thaliana (Mouse-ear cress).